We begin with the raw amino-acid sequence, 1001 residues long: RNA-binding protein 12B (1001 aa).

3 positions are modified to phosphoserine: Ser98, Ser101, and Ser112. Lys114 participates in a covalent cross-link: Glycyl lysine isopeptide (Lys-Gly) (interchain with G-Cter in SUMO2). The segment covering 119–128 (NSGYGSSINQ) has biased composition (polar residues). Residues 119-147 (NSGYGSSINQDAGFHTNGTGHGNLRPRKT) form a disordered region. Lys151 is covalently cross-linked (Glycyl lysine isopeptide (Lys-Gly) (interchain with G-Cter in SUMO2)). Residues 155 to 230 (PYLFLRGLPY…RFIEVMQGSE (76 aa)) enclose the RRM 1 domain. A compositionally biased stretch (basic and acidic residues) spans 247 to 262 (LRRSEEHSPPRGINDR). A disordered region spans residues 247–278 (LRRSEEHSPPRGINDRHFRKRSHSKSPRRTRS). Residues Ser250 and Ser254 each carry the phosphoserine modification. Residues 263-278 (HFRKRSHSKSPRRTRS) are compositionally biased toward basic residues. Thr276 is modified (phosphothreonine). Phosphoserine is present on residues Ser278, Ser280, Ser292, and Ser294. An RRM 2 domain is found at 284 to 360 (FYVHLKNLSL…RPVHIDPISR (77 aa)). At Lys319 the chain carries N6-acetyllysine. Residue Lys335 forms a Glycyl lysine isopeptide (Lys-Gly) (interchain with G-Cter in SUMO2) linkage. Ser377 is subject to Phosphoserine. Positions 400 to 477 (LCIYIRNFPF…TEVLLRLISE (78 aa)) constitute an RRM 3 domain. Residues Lys514 and Lys541 each participate in a glycyl lysine isopeptide (Lys-Gly) (interchain with G-Cter in SUMO2) cross-link. Residues 544–587 (QRDFRQPDRHPPEDFRHSSEDFRFPPEDFRHSPEDFRRPREEDF) form a disordered region. Ser575, Ser591, and Ser638 each carry phosphoserine. A compositionally biased stretch (basic and acidic residues) spans 631-881 (LEEDFRRSPT…FRSPPDDFRS (251 aa)). The tract at residues 631 to 882 (LEEDFRRSPT…RSPPDDFRSH (252 aa)) is disordered. Thr640 carries the phosphothreonine modification. Residues Ser710 and Ser718 each carry the phosphoserine modification. A Glycyl lysine isopeptide (Lys-Gly) (interchain with G-Cter in SUMO2) cross-link involves residue Lys895. The region spanning 925–1001 (TPIKIMNLPF…GPRKVKLTLL (77 aa)) is the RRM 4 domain.

In Homo sapiens (Human), this protein is RNA-binding protein 12B (RBM12B).